The sequence spans 373 residues: Putative F-box/kelch-repeat protein At5g24040 (373 aa).

Positions 2–50 constitute an F-box domain; that stretch reads VKWSELPPEILHLISLKIDNPFDLIHFRSVCSFWRSSSLLKFRHMTSLR. Kelch repeat units lie at residues 165–207 and 262–308; these read NEYM…PFKG and YDFH…CTFS.

The chain is Putative F-box/kelch-repeat protein At5g24040 from Arabidopsis thaliana (Mouse-ear cress).